A 96-amino-acid polypeptide reads, in one-letter code: Co-chaperonin GroES (96 aa).

It belongs to the GroES chaperonin family. In terms of assembly, heptamer of 7 subunits arranged in a ring. Interacts with the chaperonin GroEL.

The protein resides in the cytoplasm. Together with the chaperonin GroEL, plays an essential role in assisting protein folding. The GroEL-GroES system forms a nano-cage that allows encapsulation of the non-native substrate proteins and provides a physical environment optimized to promote and accelerate protein folding. GroES binds to the apical surface of the GroEL ring, thereby capping the opening of the GroEL channel. This chain is Co-chaperonin GroES, found in Haemophilus influenzae (strain PittGG).